The primary structure comprises 122 residues: Conotoxin flf14c (122 aa).

The signal sequence occupies residues 1–22 (MGFRVLVLIVMVTTSALPFTFS). The propeptide occupies 23 to 96 (EESGRSPFRP…AESPVGQKRW (74 aa)). The segment at 53 to 89 (RADGQTPDMHQPEMRRPEMRRPEVRRPEVRQPEFAES) is disordered. The span at 62 to 85 (HQPEMRRPEMRRPEVRRPEVRQPE) shows a compositional bias: basic and acidic residues. Intrachain disulfides connect Cys-101–Cys-121 and Cys-105–Cys-117.

Expressed by the venom duct.

It localises to the secreted. This Conus anabathrum floridanus (Florida cone) protein is Conotoxin flf14c.